A 48-amino-acid chain; its full sequence is Large ribosomal subunit protein bL33A (48 aa).

It belongs to the bacterial ribosomal protein bL33 family.

The sequence is that of Large ribosomal subunit protein bL33A from Bacillus anthracis.